A 378-amino-acid chain; its full sequence is Erythronate-4-phosphate dehydrogenase (378 aa).

The substrate site is built by serine 45 and threonine 66. NAD(+)-binding residues include aspartate 146 and threonine 175. Arginine 208 is a catalytic residue. An NAD(+)-binding site is contributed by aspartate 232. Residue glutamate 237 is part of the active site. Histidine 254 serves as the catalytic Proton donor. Glycine 257 contacts NAD(+). Substrate is bound at residue tyrosine 258.

It belongs to the D-isomer specific 2-hydroxyacid dehydrogenase family. PdxB subfamily. In terms of assembly, homodimer.

It localises to the cytoplasm. The catalysed reaction is 4-phospho-D-erythronate + NAD(+) = (R)-3-hydroxy-2-oxo-4-phosphooxybutanoate + NADH + H(+). It participates in cofactor biosynthesis; pyridoxine 5'-phosphate biosynthesis; pyridoxine 5'-phosphate from D-erythrose 4-phosphate: step 2/5. In terms of biological role, catalyzes the oxidation of erythronate-4-phosphate to 3-hydroxy-2-oxo-4-phosphonooxybutanoate. This chain is Erythronate-4-phosphate dehydrogenase, found in Escherichia coli O45:K1 (strain S88 / ExPEC).